A 130-amino-acid polypeptide reads, in one-letter code: Histone H2A type 1 (130 aa).

Residues M1–A22 form a disordered region. Position 2 is an N-acetylserine (S2). At S2 the chain carries Phosphoserine. N6-(2-hydroxyisobutyryl)lysine is present on K6. Residue K6 is modified to N6-acetyllysine. Positions Q7–S19 are enriched in basic residues. K10 is modified (N6-(2-hydroxyisobutyryl)lysine; alternate). At K10 the chain carries N6-lactoyllysine; alternate. K10 is subject to N6-succinyllysine. Glycyl lysine isopeptide (Lys-Gly) (interchain with G-Cter in ubiquitin) cross-links involve residues K14 and K16. K37 carries the post-translational modification N6-(2-hydroxyisobutyryl)lysine; alternate. N6-(2-hydroxyisobutyryl)lysine occurs at positions 75 and 76. The residue at position 96 (K96) is an N6-(2-hydroxyisobutyryl)lysine; alternate. N6-succinyllysine is present on K96. K96 is subject to N6-glutaryllysine; alternate. Q105 bears the N5-methylglutamine mark. An N6-(2-hydroxyisobutyryl)lysine; alternate modification is found at K119. Residue K119 is modified to N6-glutaryllysine; alternate. K120 participates in a covalent cross-link: Glycyl lysine isopeptide (Lys-Gly) (interchain with G-Cter in ubiquitin).

This sequence belongs to the histone H2A family. In terms of assembly, the nucleosome is a histone octamer containing two molecules each of H2A, H2B, H3 and H4 assembled in one H3-H4 heterotetramer and two H2A-H2B heterodimers. The octamer wraps approximately 147 bp of DNA. Post-translationally, monoubiquitination of Lys-120 (H2AK119Ub) gives a specific tag for epigenetic transcriptional repression. Following DNA double-strand breaks (DSBs), it is ubiquitinated through 'Lys-63' linkage of ubiquitin moieties, leading to the recruitment of repair proteins to sites of DNA damage. H2AK119Ub and ionizing radiation-induced 'Lys-63'-linked ubiquitination are distinct events. In terms of processing, phosphorylation on Ser-2 is enhanced during mitosis. Phosphorylation on Ser-2 directly represses transcription. Glutamine methylation at Gln-105 (H2AQ104me) by FBL is specifically dedicated to polymerase I. It is present at 35S ribosomal DNA locus and impairs binding of the FACT complex.

The protein resides in the nucleus. Its subcellular location is the chromosome. Its function is as follows. Core component of nucleosome. Nucleosomes wrap and compact DNA into chromatin, limiting DNA accessibility to the cellular machineries which require DNA as a template. Histones thereby play a central role in transcription regulation, DNA repair, DNA replication and chromosomal stability. DNA accessibility is regulated via a complex set of post-translational modifications of histones, also called histone code, and nucleosome remodeling. The chain is Histone H2A type 1 from Xenopus laevis (African clawed frog).